A 368-amino-acid polypeptide reads, in one-letter code: Histidinol-phosphate aminotransferase (368 aa).

Residue K223 is modified to N6-(pyridoxal phosphate)lysine.

Belongs to the class-II pyridoxal-phosphate-dependent aminotransferase family. Histidinol-phosphate aminotransferase subfamily. Homodimer. Requires pyridoxal 5'-phosphate as cofactor.

It catalyses the reaction L-histidinol phosphate + 2-oxoglutarate = 3-(imidazol-4-yl)-2-oxopropyl phosphate + L-glutamate. The protein operates within amino-acid biosynthesis; L-histidine biosynthesis; L-histidine from 5-phospho-alpha-D-ribose 1-diphosphate: step 7/9. This Rhodospirillum rubrum (strain ATCC 11170 / ATH 1.1.1 / DSM 467 / LMG 4362 / NCIMB 8255 / S1) protein is Histidinol-phosphate aminotransferase.